Reading from the N-terminus, the 204-residue chain is Guanylate kinase (204 aa).

The region spanning 5–184 (GLLLVLSGPS…AVDHIKSIVE (180 aa)) is the Guanylate kinase-like domain. 12 to 19 (GPSGVGKG) contacts ATP.

It belongs to the guanylate kinase family.

The protein localises to the cytoplasm. The enzyme catalyses GMP + ATP = GDP + ADP. Essential for recycling GMP and indirectly, cGMP. This Lactobacillus johnsonii (strain CNCM I-12250 / La1 / NCC 533) protein is Guanylate kinase.